The chain runs to 670 residues: Acetyl-coenzyme A synthetase (670 aa).

Residues 205-208 (RRGR) and Thr-326 each bind CoA. Residues 402 to 404 (GEP), 426 to 431 (STWWMT), Asp-517, Arg-532, and Arg-543 contribute to the ATP site. Residues His-556 and Val-559 each contribute to the Mg(2+) site. Arg-601 is a binding site for CoA. N6-acetyllysine is present on Lys-626.

This sequence belongs to the ATP-dependent AMP-binding enzyme family. It depends on Mg(2+) as a cofactor. Acetylated. Deacetylation by the SIR2-homolog deacetylase activates the enzyme.

The enzyme catalyses acetate + ATP + CoA = acetyl-CoA + AMP + diphosphate. Functionally, catalyzes the conversion of acetate into acetyl-CoA (AcCoA), an essential intermediate at the junction of anabolic and catabolic pathways. AcsA undergoes a two-step reaction. In the first half reaction, AcsA combines acetate with ATP to form acetyl-adenylate (AcAMP) intermediate. In the second half reaction, it can then transfer the acetyl group from AcAMP to the sulfhydryl group of CoA, forming the product AcCoA. The chain is Acetyl-coenzyme A synthetase from Pyrobaculum aerophilum (strain ATCC 51768 / DSM 7523 / JCM 9630 / CIP 104966 / NBRC 100827 / IM2).